A 500-amino-acid chain; its full sequence is Aspartyl/glutamyl-tRNA(Asn/Gln) amidotransferase subunit B (500 aa).

The protein belongs to the GatB/GatE family. GatB subfamily. Heterotrimer of A, B and C subunits.

The catalysed reaction is L-glutamyl-tRNA(Gln) + L-glutamine + ATP + H2O = L-glutaminyl-tRNA(Gln) + L-glutamate + ADP + phosphate + H(+). The enzyme catalyses L-aspartyl-tRNA(Asn) + L-glutamine + ATP + H2O = L-asparaginyl-tRNA(Asn) + L-glutamate + ADP + phosphate + 2 H(+). Its function is as follows. Allows the formation of correctly charged Asn-tRNA(Asn) or Gln-tRNA(Gln) through the transamidation of misacylated Asp-tRNA(Asn) or Glu-tRNA(Gln) in organisms which lack either or both of asparaginyl-tRNA or glutaminyl-tRNA synthetases. The reaction takes place in the presence of glutamine and ATP through an activated phospho-Asp-tRNA(Asn) or phospho-Glu-tRNA(Gln). The protein is Aspartyl/glutamyl-tRNA(Asn/Gln) amidotransferase subunit B of Brucella ovis (strain ATCC 25840 / 63/290 / NCTC 10512).